The chain runs to 134 residues: ATP synthase epsilon chain, chloroplastic (134 aa).

It belongs to the ATPase epsilon chain family. F-type ATPases have 2 components, CF(1) - the catalytic core - and CF(0) - the membrane proton channel. CF(1) has five subunits: alpha(3), beta(3), gamma(1), delta(1), epsilon(1). CF(0) has three main subunits: a, b and c.

The protein resides in the plastid. It is found in the chloroplast thylakoid membrane. Produces ATP from ADP in the presence of a proton gradient across the membrane. The chain is ATP synthase epsilon chain, chloroplastic from Liriodendron tulipifera (Tuliptree).